The primary structure comprises 948 residues: Valine--tRNA ligase (948 aa).

Residues 40–50 carry the 'HIGH' region motif; that stretch reads PNVTGSLHMGH. Residues 551 to 555 carry the 'KMSKS' region motif; sequence KMSKS. K554 is a binding site for ATP. A coiled-coil region spans residues 879-945; it reads LIDKGAELAR…GKLAEQHARI (67 aa).

It belongs to the class-I aminoacyl-tRNA synthetase family. ValS type 1 subfamily. As to quaternary structure, monomer.

The protein localises to the cytoplasm. It carries out the reaction tRNA(Val) + L-valine + ATP = L-valyl-tRNA(Val) + AMP + diphosphate. Functionally, catalyzes the attachment of valine to tRNA(Val). As ValRS can inadvertently accommodate and process structurally similar amino acids such as threonine, to avoid such errors, it has a 'posttransfer' editing activity that hydrolyzes mischarged Thr-tRNA(Val) in a tRNA-dependent manner. The polypeptide is Valine--tRNA ligase (Pseudomonas syringae pv. tomato (strain ATCC BAA-871 / DC3000)).